The chain runs to 166 residues: ATP synthase subunit b (166 aa).

A helical transmembrane segment spans residues Phe-8 to Val-28.

The protein belongs to the ATPase B chain family. In terms of assembly, F-type ATPases have 2 components, F(1) - the catalytic core - and F(0) - the membrane proton channel. F(1) has five subunits: alpha(3), beta(3), gamma(1), delta(1), epsilon(1). F(0) has three main subunits: a(1), b(2) and c(10-14). The alpha and beta chains form an alternating ring which encloses part of the gamma chain. F(1) is attached to F(0) by a central stalk formed by the gamma and epsilon chains, while a peripheral stalk is formed by the delta and b chains.

It is found in the cell inner membrane. In terms of biological role, f(1)F(0) ATP synthase produces ATP from ADP in the presence of a proton or sodium gradient. F-type ATPases consist of two structural domains, F(1) containing the extramembraneous catalytic core and F(0) containing the membrane proton channel, linked together by a central stalk and a peripheral stalk. During catalysis, ATP synthesis in the catalytic domain of F(1) is coupled via a rotary mechanism of the central stalk subunits to proton translocation. Component of the F(0) channel, it forms part of the peripheral stalk, linking F(1) to F(0). The protein is ATP synthase subunit b of Flavobacterium johnsoniae (strain ATCC 17061 / DSM 2064 / JCM 8514 / BCRC 14874 / CCUG 350202 / NBRC 14942 / NCIMB 11054 / UW101) (Cytophaga johnsonae).